The following is a 431-amino-acid chain: MIDKVYCADVTPEMEGKKVKLAGWVYRKREVGKKVFIVLRDSSGIVQVVFSKDLNEEAYREAKKVGIESSVIIEGTVKADPRAPTGAEVQGEKLQIIQNVDFFPITKDASDEFLLDVRHLHLRSPKVAAIMKVKGTLMQAAREWLLQDGWYEVFPPILVTGAVEGGATLFKLKYFDRYAYLSQSAQLYLEAAIFGLEKVWSLTPSFRAEKSRTRRHLTEFWHLELEAAWMDLWDIMKVEEELVSYMVQRTLELRKKEIELYRKDDIKTLKNAVPPFPRISYDEAIDILQSKGVNIEWGEDMGADEERVLTEEFESPFFVYGYPKHIKAFYMKEDPEDPRKVLAADMLAPEGYGEIIGGSQREDDYDKLVQRILEEGMKPEDYEWYLDLRKYGSVPHSGFGLGLERLVAWVLKLDHVRWATLFPRTPSRLYP.

Belongs to the class-II aminoacyl-tRNA synthetase family.

It localises to the cytoplasm. The catalysed reaction is tRNA(Asn) + L-asparagine + ATP = L-asparaginyl-tRNA(Asn) + AMP + diphosphate + H(+). In Thermococcus kodakarensis (strain ATCC BAA-918 / JCM 12380 / KOD1) (Pyrococcus kodakaraensis (strain KOD1)), this protein is Asparagine--tRNA ligase.